The following is a 347-amino-acid chain: Quinolinate synthase (347 aa).

Residues histidine 47 and serine 68 each coordinate iminosuccinate. Residue cysteine 113 participates in [4Fe-4S] cluster binding. Residues 139–141 (YAN) and serine 156 contribute to the iminosuccinate site. Cysteine 200 contributes to the [4Fe-4S] cluster binding site. Iminosuccinate is bound by residues 226–228 (HPE) and threonine 243. Cysteine 297 serves as a coordination point for [4Fe-4S] cluster.

It belongs to the quinolinate synthase family. Type 1 subfamily. The cofactor is [4Fe-4S] cluster.

Its subcellular location is the cytoplasm. The catalysed reaction is iminosuccinate + dihydroxyacetone phosphate = quinolinate + phosphate + 2 H2O + H(+). Its pathway is cofactor biosynthesis; NAD(+) biosynthesis; quinolinate from iminoaspartate: step 1/1. Functionally, catalyzes the condensation of iminoaspartate with dihydroxyacetone phosphate to form quinolinate. In Salmonella enteritidis PT4 (strain P125109), this protein is Quinolinate synthase.